Here is a 342-residue protein sequence, read N- to C-terminus: MSAFTPASEVLLRHSDDFEQSRILFAGDLQDDLPARFECAASRAYTQQFHHWQALSRQMGDNVRFSLVAQASDVADCDTLIYYWPKNKPEAQFQLMNILSLMSVGSDVFVVGENRSGVRSAEPMLADYAPLNKVDSARRCGLYHGRLEKQPQFSLESWWAEYNIDGLTIKTLPGVFSRDGLDVGSQLLLSTLTPHTKGKVLDVGCGAGVLSAALASHSPKVRLTLCDVSAPAVEASRATLAANGLEGEVFASNVFSEVKGRFDMIISNPPFHDGMQTSLDAAQTLIRGAVRHLNSGGELRIVANAFLPYPKILDETFGFHEVIAQTGRFKVYRTVMTRQAKK.

This sequence belongs to the methyltransferase superfamily. RsmC family. Monomer.

Its subcellular location is the cytoplasm. The catalysed reaction is guanosine(1207) in 16S rRNA + S-adenosyl-L-methionine = N(2)-methylguanosine(1207) in 16S rRNA + S-adenosyl-L-homocysteine + H(+). Specifically methylates the guanine in position 1207 of 16S rRNA in the 30S particle. This Salmonella paratyphi A (strain ATCC 9150 / SARB42) protein is Ribosomal RNA small subunit methyltransferase C.